The following is a 102-amino-acid chain: uncharacterized protein (102 aa).

The tract at residues M1–G43 is disordered. Residues I9 to S21 show a composition bias toward polar residues. Over residues G25–G43 the composition is skewed to low complexity.

This is an uncharacterized protein from Saccharomyces cerevisiae (strain ATCC 204508 / S288c) (Baker's yeast).